The following is a 52-amino-acid chain: Eukaryotic translation initiation factor 5A (52 aa).

Hypusine is present on Lys42.

This sequence belongs to the eIF-5A family. Post-translationally, lys-42 undergoes hypusination, a unique post-translational modification that consists in the addition of a butylamino group from spermidine to lysine side chain, leading to the formation of the unusual amino acid hypusine. eIF-5As are the only known proteins to undergo this modification, which is essential for their function.

The protein localises to the cytoplasm. In terms of biological role, translation factor that promotes translation elongation and termination, particularly upon ribosome stalling at specific amino acid sequence contexts. Binds between the exit (E) and peptidyl (P) site of the ribosome and promotes rescue of stalled ribosome: specifically required for efficient translation of polyproline-containing peptides as well as other motifs that stall the ribosome. Acts as a ribosome quality control (RQC) cofactor by joining the RQC complex to facilitate peptidyl transfer during CAT tailing step. The chain is Eukaryotic translation initiation factor 5A from Schistosoma mansoni (Blood fluke).